The sequence spans 227 residues: Cytochrome c oxidase subunit 2 (227 aa).

At 1 to 14 (MAYPLQLGFQDAVS) the chain is on the mitochondrial intermembrane side. The chain crosses the membrane as a helical span at residues 15–45 (PIMEELLYFHDHTLMIVFLISSLVLYIITLM). The Mitochondrial matrix segment spans residues 46 to 59 (LTTKLTHTNTMNAQ). The helical transmembrane segment at 60 to 87 (EVETVWTILPAIILILIALPSLRILYMM) threads the bilayer. Residues 88 to 227 (DEINNPSLTV…TFEKWTASLL (140 aa)) lie on the Mitochondrial intermembrane side of the membrane. 6 residues coordinate Cu cation: His161, Cys196, Glu198, Cys200, His204, and Met207. Glu198 provides a ligand contact to Mg(2+).

The protein belongs to the cytochrome c oxidase subunit 2 family. In terms of assembly, component of the cytochrome c oxidase (complex IV, CIV), a multisubunit enzyme composed of 14 subunits. The complex is composed of a catalytic core of 3 subunits MT-CO1, MT-CO2 and MT-CO3, encoded in the mitochondrial DNA, and 11 supernumerary subunits COX4I, COX5A, COX5B, COX6A, COX6B, COX6C, COX7A, COX7B, COX7C, COX8 and NDUFA4, which are encoded in the nuclear genome. The complex exists as a monomer or a dimer and forms supercomplexes (SCs) in the inner mitochondrial membrane with NADH-ubiquinone oxidoreductase (complex I, CI) and ubiquinol-cytochrome c oxidoreductase (cytochrome b-c1 complex, complex III, CIII), resulting in different assemblies (supercomplex SCI(1)III(2)IV(1) and megacomplex MCI(2)III(2)IV(2)). Found in a complex with TMEM177, COA6, COX18, COX20, SCO1 and SCO2. Interacts with TMEM177 in a COX20-dependent manner. Interacts with COX20. Interacts with COX16. It depends on Cu cation as a cofactor.

It is found in the mitochondrion inner membrane. It catalyses the reaction 4 Fe(II)-[cytochrome c] + O2 + 8 H(+)(in) = 4 Fe(III)-[cytochrome c] + 2 H2O + 4 H(+)(out). Its function is as follows. Component of the cytochrome c oxidase, the last enzyme in the mitochondrial electron transport chain which drives oxidative phosphorylation. The respiratory chain contains 3 multisubunit complexes succinate dehydrogenase (complex II, CII), ubiquinol-cytochrome c oxidoreductase (cytochrome b-c1 complex, complex III, CIII) and cytochrome c oxidase (complex IV, CIV), that cooperate to transfer electrons derived from NADH and succinate to molecular oxygen, creating an electrochemical gradient over the inner membrane that drives transmembrane transport and the ATP synthase. Cytochrome c oxidase is the component of the respiratory chain that catalyzes the reduction of oxygen to water. Electrons originating from reduced cytochrome c in the intermembrane space (IMS) are transferred via the dinuclear copper A center (CU(A)) of subunit 2 and heme A of subunit 1 to the active site in subunit 1, a binuclear center (BNC) formed by heme A3 and copper B (CU(B)). The BNC reduces molecular oxygen to 2 water molecules using 4 electrons from cytochrome c in the IMS and 4 protons from the mitochondrial matrix. This chain is Cytochrome c oxidase subunit 2 (MT-CO2), found in Hippopotamus amphibius (Hippopotamus).